The primary structure comprises 930 residues: Isoleucine--tRNA ligase (930 aa).

Residues 57–67 (PYANGNIHVGH) carry the 'HIGH' region motif. Residue Glu-554 coordinates L-isoleucyl-5'-AMP. A 'KMSKS' region motif is present at residues 595–599 (KMSKS). Lys-598 provides a ligand contact to ATP. Zn(2+) contacts are provided by Cys-888, Cys-891, Cys-908, and Cys-911.

The protein belongs to the class-I aminoacyl-tRNA synthetase family. IleS type 1 subfamily. In terms of assembly, monomer. It depends on Zn(2+) as a cofactor.

The protein localises to the cytoplasm. It carries out the reaction tRNA(Ile) + L-isoleucine + ATP = L-isoleucyl-tRNA(Ile) + AMP + diphosphate. Its function is as follows. Catalyzes the attachment of isoleucine to tRNA(Ile). As IleRS can inadvertently accommodate and process structurally similar amino acids such as valine, to avoid such errors it has two additional distinct tRNA(Ile)-dependent editing activities. One activity is designated as 'pretransfer' editing and involves the hydrolysis of activated Val-AMP. The other activity is designated 'posttransfer' editing and involves deacylation of mischarged Val-tRNA(Ile). The protein is Isoleucine--tRNA ligase of Streptococcus pneumoniae serotype 4 (strain ATCC BAA-334 / TIGR4).